The following is a 320-amino-acid chain: Glyoxylate/hydroxypyruvate reductase B (320 aa).

Catalysis depends on residues Arg-233 and Glu-262. His-281 serves as the catalytic Proton donor.

This sequence belongs to the D-isomer specific 2-hydroxyacid dehydrogenase family. GhrB subfamily. In terms of assembly, homodimer.

It localises to the cytoplasm. It catalyses the reaction glycolate + NADP(+) = glyoxylate + NADPH + H(+). The enzyme catalyses (R)-glycerate + NAD(+) = 3-hydroxypyruvate + NADH + H(+). The catalysed reaction is (R)-glycerate + NADP(+) = 3-hydroxypyruvate + NADPH + H(+). Its function is as follows. Catalyzes the NADPH-dependent reduction of glyoxylate and hydroxypyruvate into glycolate and glycerate, respectively. The polypeptide is Glyoxylate/hydroxypyruvate reductase B (Pectobacterium carotovorum subsp. carotovorum (strain PC1)).